Reading from the N-terminus, the 160-residue chain is Transcription antitermination protein NusB (160 aa).

It belongs to the NusB family.

Functionally, involved in transcription antitermination. Required for transcription of ribosomal RNA (rRNA) genes. Binds specifically to the boxA antiterminator sequence of the ribosomal RNA (rrn) operons. The sequence is that of Transcription antitermination protein NusB from Nitrobacter hamburgensis (strain DSM 10229 / NCIMB 13809 / X14).